A 466-amino-acid polypeptide reads, in one-letter code: Ribulose bisphosphate carboxylase large chain (466 aa).

At K5 the chain carries N6,N6,N6-trimethyllysine. Positions 114 and 164 each coordinate substrate. K166 serves as the catalytic Proton acceptor. K168 is a binding site for substrate. 3 residues coordinate Mg(2+): K192, D194, and E195. Residue K192 is modified to N6-carboxylysine. The active-site Proton acceptor is the H285. Substrate contacts are provided by R286, H318, and S370.

Belongs to the RuBisCO large chain family. Type I subfamily. Heterohexadecamer of 8 large chains and 8 small chains; disulfide-linked. The disulfide link is formed within the large subunit homodimers. It depends on Mg(2+) as a cofactor. In terms of processing, the disulfide bond which can form in the large chain dimeric partners within the hexadecamer appears to be associated with oxidative stress and protein turnover.

It is found in the plastid. The protein resides in the chloroplast. It carries out the reaction 2 (2R)-3-phosphoglycerate + 2 H(+) = D-ribulose 1,5-bisphosphate + CO2 + H2O. The enzyme catalyses D-ribulose 1,5-bisphosphate + O2 = 2-phosphoglycolate + (2R)-3-phosphoglycerate + 2 H(+). In terms of biological role, ruBisCO catalyzes two reactions: the carboxylation of D-ribulose 1,5-bisphosphate, the primary event in carbon dioxide fixation, as well as the oxidative fragmentation of the pentose substrate in the photorespiration process. Both reactions occur simultaneously and in competition at the same active site. This is Ribulose bisphosphate carboxylase large chain from Eremothamnus marlothianus.